Reading from the N-terminus, the 257-residue chain is Snake venom serine protease 2C (257 aa).

Positions 1–18 (MVLIRVLANLLILQLSYA) are cleaved as a signal peptide. Positions 19–24 (QKSSEL) are excised as a propeptide. A Peptidase S1 domain is found at 25-248 (VIGGHPCNIN…HLDWIKSIIA (224 aa)). Intrachain disulfides connect cysteine 31–cysteine 162, cysteine 49–cysteine 65, cysteine 97–cysteine 255, cysteine 141–cysteine 209, cysteine 173–cysteine 188, and cysteine 199–cysteine 224. Residues histidine 64 and aspartate 109 each act as charge relay system in the active site. N-linked (GlcNAc...) asparagine glycans are attached at residues asparagine 116, asparagine 120, and asparagine 121. The Charge relay system role is filled by serine 203.

The protein belongs to the peptidase S1 family. Snake venom subfamily. In terms of assembly, monomer. As to expression, expressed by the venom gland.

The protein localises to the secreted. Its function is as follows. Snake venom serine protease that may act in the hemostasis system of the prey. The protein is Snake venom serine protease 2C (TLG2C) of Craspedocephalus gramineus (Bamboo pit viper).